The following is a 139-amino-acid chain: Cystatin (139 aa).

A signal peptide spans 1 to 23 (MAGARGCVVLLAAALMLVGAVLG). A Secondary area of contact motif is present at residues 76–80 (QLVSG). 2 disulfide bridges follow: cysteine 94/cysteine 104 and cysteine 118/cysteine 138. Serine 103 is subject to Phosphoserine.

The protein belongs to the cystatin family.

It is found in the secreted. In terms of biological role, this protein binds tightly to and inhibits a variety of thiol proteases including ficin, papain, and cathepsins B, C, H, and L. Although isolated from egg white, it is also present in serum. This chain is Cystatin, found in Gallus gallus (Chicken).